Consider the following 417-residue polypeptide: Serine hydroxymethyltransferase (417 aa).

(6S)-5,6,7,8-tetrahydrofolate contacts are provided by residues leucine 121 and 125-127 (GHL). Lysine 229 bears the N6-(pyridoxal phosphate)lysine mark. 355 to 357 (SPF) serves as a coordination point for (6S)-5,6,7,8-tetrahydrofolate.

Belongs to the SHMT family. In terms of assembly, homodimer. Pyridoxal 5'-phosphate is required as a cofactor.

The protein localises to the cytoplasm. The enzyme catalyses (6R)-5,10-methylene-5,6,7,8-tetrahydrofolate + glycine + H2O = (6S)-5,6,7,8-tetrahydrofolate + L-serine. It participates in one-carbon metabolism; tetrahydrofolate interconversion. Its pathway is amino-acid biosynthesis; glycine biosynthesis; glycine from L-serine: step 1/1. Its function is as follows. Catalyzes the reversible interconversion of serine and glycine with tetrahydrofolate (THF) serving as the one-carbon carrier. This reaction serves as the major source of one-carbon groups required for the biosynthesis of purines, thymidylate, methionine, and other important biomolecules. Also exhibits THF-independent aldolase activity toward beta-hydroxyamino acids, producing glycine and aldehydes, via a retro-aldol mechanism. The polypeptide is Serine hydroxymethyltransferase (Sodalis glossinidius (strain morsitans)).